Here is a 199-residue protein sequence, read N- to C-terminus: dTTP/UTP pyrophosphatase (199 aa).

Aspartate 76 functions as the Proton acceptor in the catalytic mechanism.

It belongs to the Maf family. YhdE subfamily. The cofactor is a divalent metal cation.

It localises to the cytoplasm. The catalysed reaction is dTTP + H2O = dTMP + diphosphate + H(+). It catalyses the reaction UTP + H2O = UMP + diphosphate + H(+). In terms of biological role, nucleoside triphosphate pyrophosphatase that hydrolyzes dTTP and UTP. May have a dual role in cell division arrest and in preventing the incorporation of modified nucleotides into cellular nucleic acids. In Chlorobaculum parvum (strain DSM 263 / NCIMB 8327) (Chlorobium vibrioforme subsp. thiosulfatophilum), this protein is dTTP/UTP pyrophosphatase.